A 37-amino-acid chain; its full sequence is Potassium channel toxin alpha-KTx 2.14 (37 aa).

3 disulfide bridges follow: cysteine 7/cysteine 28, cysteine 13/cysteine 33, and cysteine 17/cysteine 35.

Belongs to the short scorpion toxin superfamily. Potassium channel inhibitor family. Alpha-KTx 02 subfamily. Expressed by the venom gland.

Its subcellular location is the secreted. Reversibly blocks hKv1.1/KCNA1 (50% inhibition of current at 1 uM). Seems not to be voltage-dependent. This Heteroctenus garridoi (Cuban scorpion) protein is Potassium channel toxin alpha-KTx 2.14.